Consider the following 252-residue polypeptide: Small ribosomal subunit protein uS3 (252 aa).

In terms of domain architecture, KH type-2 spans 39–111 (IRKLINNFAK…EVNLNVLEVK (73 aa)). A disordered region spans residues 222 to 252 (KPFASQSSNTPNRRPRNFKGGNNNHVNAKKN). Positions 241–252 (GGNNNHVNAKKN) are enriched in polar residues.

It belongs to the universal ribosomal protein uS3 family. As to quaternary structure, part of the 30S ribosomal subunit. Forms a tight complex with proteins S10 and S14.

Its function is as follows. Binds the lower part of the 30S subunit head. Binds mRNA in the 70S ribosome, positioning it for translation. The chain is Small ribosomal subunit protein uS3 from Phytoplasma sp. (strain STRAWB2).